A 1637-amino-acid polypeptide reads, in one-letter code: Endoribonuclease Dicer homolog 3b (1637 aa).

Residues 1 to 40 form a disordered region; sequence MADDEAAVLPPPPPLPPPCRPHRQLRPRGSRPTADTTPRT. Pro residues predominate over residues 9-19; sequence LPPPPPLPPPC. Residues 20–29 show a composition bias toward basic residues; the sequence is RPHRQLRPRG. Residues 46-222 enclose the Helicase ATP-binding domain; the sequence is VFEAALRGNT…LHNCEAHISQ (177 aa). 59–66 provides a ligand contact to ATP; that stretch reads LDTGSGKT. The DECH box signature appears at 169 to 172; it reads DECH. The 153-residue stretch at 404–556 folds into the Helicase C-terminal domain; the sequence is SFGSSNEVLC…ALYRHPNALS (153 aa). In terms of domain architecture, Dicer dsRNA-binding fold spans 581–671; that stretch reads CVNLIRKYCE…VPLTEEPMDT (91 aa). Positions 882–1006 constitute a PAZ domain; sequence EIIHLANKSL…VPPELLIHLD (125 aa). The RNase III 1 domain occupies 1031-1200; it reads ASQLRREIGY…LVGAYYVGGG (170 aa). Asp1214, Asp1309, and Ser1312 together coordinate Mg(2+). Residues 1241–1389 form the RNase III 2 domain; that stretch reads IEELEAKLKY…IAGAVFIDTD (149 aa). DRBM domains follow at residues 1412–1481 and 1545–1629; these read LALP…DLKQ and GPRS…KLQE.

It belongs to the helicase family. Dicer subfamily. In terms of assembly, may interact with ARGONAUTE1 or PINHEAD through their common PAZ domains. The cofactor is Mg(2+). Mn(2+) is required as a cofactor.

Its subcellular location is the nucleus. In terms of biological role, probably involved in the RNA silencing pathway. May cleave double-stranded RNA to produce short 21-24 nucleotides (nt) RNAs which target the selective destruction of complementary RNAs. The protein is Endoribonuclease Dicer homolog 3b (DCL3B) of Oryza sativa subsp. japonica (Rice).